Reading from the N-terminus, the 409-residue chain is Dual-specificity RNA methyltransferase RlmN (409 aa).

Glu121 (proton acceptor) is an active-site residue. A Radical SAM core domain is found at 127 to 376 (EEGRGTLCIS…IRTPRGRDIL (250 aa)). Cysteines 134 and 379 form a disulfide. [4Fe-4S] cluster-binding residues include Cys141, Cys145, and Cys148. S-adenosyl-L-methionine-binding positions include 205–206 (GE), Ser237, 259–261 (SLH), and Asn336. Cys379 serves as the catalytic S-methylcysteine intermediate.

This sequence belongs to the radical SAM superfamily. RlmN family. [4Fe-4S] cluster serves as cofactor.

Its subcellular location is the cytoplasm. It catalyses the reaction adenosine(2503) in 23S rRNA + 2 reduced [2Fe-2S]-[ferredoxin] + 2 S-adenosyl-L-methionine = 2-methyladenosine(2503) in 23S rRNA + 5'-deoxyadenosine + L-methionine + 2 oxidized [2Fe-2S]-[ferredoxin] + S-adenosyl-L-homocysteine. The catalysed reaction is adenosine(37) in tRNA + 2 reduced [2Fe-2S]-[ferredoxin] + 2 S-adenosyl-L-methionine = 2-methyladenosine(37) in tRNA + 5'-deoxyadenosine + L-methionine + 2 oxidized [2Fe-2S]-[ferredoxin] + S-adenosyl-L-homocysteine. Functionally, specifically methylates position 2 of adenine 2503 in 23S rRNA and position 2 of adenine 37 in tRNAs. m2A2503 modification seems to play a crucial role in the proofreading step occurring at the peptidyl transferase center and thus would serve to optimize ribosomal fidelity. This Agrobacterium fabrum (strain C58 / ATCC 33970) (Agrobacterium tumefaciens (strain C58)) protein is Dual-specificity RNA methyltransferase RlmN.